The chain runs to 477 residues: Ankyrin repeat, SAM and basic leucine zipper domain-containing protein 1 (477 aa).

Residues 1–24 (MAASSLWGPAVAGGGESSESEDDG) form a disordered region. Ser-17, Ser-18, and Ser-20 each carry phosphoserine. ANK repeat units follow at residues 45-74 (EKNE…SVDS), 78-107 (YGWT…NASF), 110-144 (DKQT…DPNV), 148-177 (RQMT…EVNA), 181-210 (NGYT…NKML), and 214-243 (DGKT…PLEG). In terms of domain architecture, SAM spans 272–334 (SYTAFGELDL…KILSALKELM (63 aa)).

Interacts with DDX4, PIWIL1, RANBP9 and TDRD1.

The protein resides in the cytoplasm. Plays a central role during spermatogenesis by repressing transposable elements and preventing their mobilization, which is essential for the germline integrity. Acts via the piRNA metabolic process, which mediates the repression of transposable elements during meiosis by forming complexes composed of piRNAs and Piwi proteins and governs the methylation and subsequent repression of transposons. Its association with pi-bodies suggests a participation in the primary piRNAs metabolic process. Required prior to the pachytene stage to facilitate the production of multiple types of piRNAs, including those associated with repeats involved in the regulation of retrotransposons. May act by mediating protein-protein interactions during germ cell maturation. In Echinops telfairi (Lesser hedgehog tenrec), this protein is Ankyrin repeat, SAM and basic leucine zipper domain-containing protein 1 (ASZ1).